The chain runs to 538 residues: Phosphoenolpyruvate carboxykinase (ATP) (538 aa).

Substrate is bound by residues Arg64, Tyr205, and Lys211. Residues Lys211, His230, and 246-254 (GLSGTGKTT) each bind ATP. Residues Lys211 and His230 each coordinate Mn(2+). Asp267 contributes to the Mn(2+) binding site. Residues Glu295, Arg331, 447–448 (RI), and Thr453 contribute to the ATP site. Arg331 is a binding site for substrate.

It belongs to the phosphoenolpyruvate carboxykinase (ATP) family. As to quaternary structure, monomer. Mn(2+) serves as cofactor.

Its subcellular location is the cytoplasm. It carries out the reaction oxaloacetate + ATP = phosphoenolpyruvate + ADP + CO2. The protein operates within carbohydrate biosynthesis; gluconeogenesis. Involved in the gluconeogenesis. Catalyzes the conversion of oxaloacetate (OAA) to phosphoenolpyruvate (PEP) through direct phosphoryl transfer between the nucleoside triphosphate and OAA. This is Phosphoenolpyruvate carboxykinase (ATP) from Haemophilus influenzae (strain ATCC 51907 / DSM 11121 / KW20 / Rd).